The following is a 412-amino-acid chain: Class E basic helix-loop-helix protein 40 (412 aa).

An essential for interaction with BMAL1, E-box binding and repressor activity against the CLOCK-BMAL1 heterodimer region spans residues 1 to 139 (MERIPSAQPP…LSGRNVETGQ (139 aa)). The region spanning 52 to 107 (TYKLPHRLIEKKRRDRINECIAQLKDLLPEHLKLTTLGHLEKAVVLELTLKHVKAL) is the bHLH domain. A necessary for interaction with RXRA and repressor activity against RXRA region spans residues 75 to 79 (LKDLL). An Orange domain is found at 142–175 (FCSGFQTCAREVLQYLAKHENTRDLKSSQLVTHL). Lysine 159 is covalently cross-linked (Glycyl lysine isopeptide (Lys-Gly) (interchain with G-Cter in SUMO1, SUMO2 and SUMO3)). Lysine 167 participates in a covalent cross-link: Glycyl lysine isopeptide (Lys-Gly) (interchain with G-Cter in SUMO2). A disordered region spans residues 182 to 303 (LLQGGTSRKP…LSDDEGHFTS (122 aa)). The residue at position 235 (serine 235) is a Phosphoserine. The span at 248-271 (ESEKGDLRSEQPCFKSDHGRRFTM) shows a compositional bias: basic and acidic residues. Residue lysine 279 forms a Glycyl lysine isopeptide (Lys-Gly) (interchain with G-Cter in SUMO1); alternate linkage. Lysine 279 participates in a covalent cross-link: Glycyl lysine isopeptide (Lys-Gly) (interchain with G-Cter in SUMO1, SUMO2 and SUMO3); alternate. A Glycyl lysine isopeptide (Lys-Gly) (interchain with G-Cter in SUMO2); alternate cross-link involves residue lysine 279. A Glycyl lysine isopeptide (Lys-Gly) (interchain with G-Cter in SUMO2) cross-link involves residue lysine 288. At serine 383 the chain carries Phosphoserine.

In terms of assembly, homodimer. Heterodimer with BHLHE41/DEC2. Interacts with TCF3/E47. Interacts with ubiquitin-conjugating enzyme UBE2I/UBC9. Interacts with HDAC1, SUMO1, RXRA and BMAL1. In terms of processing, ubiquitinated; which may lead to proteasomal degradation. Sumoylation inhibits its ubiquitination and promotes its negative regulation of the CLOCK-BMAL1 heterodimer transcriptional activator activity. In terms of tissue distribution, expressed in cartilage, spleen, intestine, lung, and to a lesser extent in heart, brain, liver, muscle and stomach.

The protein resides in the cytoplasm. Its subcellular location is the nucleus. In terms of biological role, transcriptional repressor involved in the regulation of the circadian rhythm by negatively regulating the activity of the clock genes and clock-controlled genes. Acts as the negative limb of a novel autoregulatory feedback loop (DEC loop) which differs from the one formed by the PER and CRY transcriptional repressors (PER/CRY loop). Both these loops are interlocked as it represses the expression of PER1/2 and in turn is repressed by PER1/2 and CRY1/2. Represses the activity of the circadian transcriptional activator: CLOCK-BMAL1|BMAL2 heterodimer by competing for the binding to E-box elements (5'-CACGTG-3') found within the promoters of its target genes. Negatively regulates its own expression and the expression of DBP and BHLHE41/DEC2. Acts as a corepressor of RXR and the RXR-LXR heterodimers and represses the ligand-induced RXRA and NR1H3/LXRA transactivation activity. May be involved in the regulation of chondrocyte differentiation via the cAMP pathway. Represses the transcription of NR0B2 and attentuates the transactivation of NR0B2 by the CLOCK-BMAL1 complex. Drives the circadian rhythm of blood pressure through transcriptional repression of ATP1B1 in the cardiovascular system. This chain is Class E basic helix-loop-helix protein 40 (BHLHE40), found in Homo sapiens (Human).